Consider the following 521-residue polypeptide: Cysteine protease atg-4.2 (521 aa).

Positions 90-100 (MMGSIRPSSSS) are enriched in low complexity. Positions 90 to 109 (MMGSIRPSSSSQDVHSTGEI) are disordered. The Nucleophile role is filled by Cys-203. Residues Asp-394 and His-396 contribute to the active site. A disordered region spans residues 499 to 521 (PSYEREVSETEQAQADKHGFEML).

Belongs to the peptidase C54 family.

It is found in the cytoplasm. It catalyses the reaction [protein]-C-terminal L-amino acid-glycyl-phosphatidylethanolamide + H2O = [protein]-C-terminal L-amino acid-glycine + a 1,2-diacyl-sn-glycero-3-phosphoethanolamine. Its function is as follows. Cysteine protease required for autophagy. Cleaves the C-terminal amino acid of ATG8 family proteins lgg-1, to reveal a C-terminal glycine. Exposure of the glycine at the C-terminus is essential for ATG8 proteins conjugation to phosphatidylethanolamine (PE) and insertion to membranes, which is necessary for autophagy. Its cleavage activity is functionally redundant to atg-4.1, but it cleaves lgg-1 precursors less efficiently than atg-4.1. In contrast to atg-4.1, plays a more significant role in the later phases of autophagy and in addition has a role in autophagosome maturation. Acts redundantly with atg-4.1 to promote the lgg-1 delipidation to release the protein from membranes, which facilitates multiple events during macroautophagy. Regulates the accumulation of autophagic structures in neurons and is specifically, required for the maturation and elimination of autophagosomes from the synaptic region of AIY interneurons. In Caenorhabditis elegans, this protein is Cysteine protease atg-4.2.